Here is a 328-residue protein sequence, read N- to C-terminus: L-lactate dehydrogenase (328 aa).

NAD(+)-binding positions include valine 18, glutamate 39, lysine 46, tyrosine 71, and 85–86; that span reads GA. Residues glutamine 88 and arginine 94 each contribute to the substrate site. NAD(+) contacts are provided by residues serine 107, 124-126, and serine 149; that span reads AAN. 126–129 lines the substrate pocket; it reads NPVD. 154–157 contacts substrate; that stretch reads DSAR. The beta-D-fructose 1,6-bisphosphate site is built by arginine 159 and histidine 174. Histidine 181 acts as the Proton acceptor in catalysis. A Phosphotyrosine modification is found at tyrosine 226. Residue threonine 235 participates in substrate binding.

This sequence belongs to the LDH/MDH superfamily. LDH family. In terms of assembly, homotetramer.

It localises to the cytoplasm. It carries out the reaction (S)-lactate + NAD(+) = pyruvate + NADH + H(+). Its pathway is fermentation; pyruvate fermentation to lactate; (S)-lactate from pyruvate: step 1/1. With respect to regulation, allosterically activated by fructose 1,6-bisphosphate (FBP). Its function is as follows. Catalyzes the conversion of lactate to pyruvate. The sequence is that of L-lactate dehydrogenase from Streptococcus pneumoniae (strain ATCC BAA-255 / R6).